The following is a 348-amino-acid chain: Phosphoribosylformylglycinamidine cyclo-ligase (348 aa).

It belongs to the AIR synthase family.

The protein localises to the cytoplasm. It carries out the reaction 2-formamido-N(1)-(5-O-phospho-beta-D-ribosyl)acetamidine + ATP = 5-amino-1-(5-phospho-beta-D-ribosyl)imidazole + ADP + phosphate + H(+). The protein operates within purine metabolism; IMP biosynthesis via de novo pathway; 5-amino-1-(5-phospho-D-ribosyl)imidazole from N(2)-formyl-N(1)-(5-phospho-D-ribosyl)glycinamide: step 2/2. This is Phosphoribosylformylglycinamidine cyclo-ligase from Cereibacter sphaeroides (strain ATCC 17023 / DSM 158 / JCM 6121 / CCUG 31486 / LMG 2827 / NBRC 12203 / NCIMB 8253 / ATH 2.4.1.) (Rhodobacter sphaeroides).